A 305-amino-acid polypeptide reads, in one-letter code: Glycine--tRNA ligase alpha subunit (305 aa).

It belongs to the class-II aminoacyl-tRNA synthetase family. In terms of assembly, tetramer of two alpha and two beta subunits.

It localises to the cytoplasm. It carries out the reaction tRNA(Gly) + glycine + ATP = glycyl-tRNA(Gly) + AMP + diphosphate. This is Glycine--tRNA ligase alpha subunit from Streptococcus pneumoniae serotype 19F (strain G54).